The primary structure comprises 33 residues: Dermaseptin-H8 (33 aa).

At Leu33 the chain carries Leucine amide.

As to expression, expressed by the skin glands.

It is found in the secreted. Functionally, has antimicrobial activity. The protein is Dermaseptin-H8 of Pithecopus hypochondrialis (Orange-legged leaf frog).